Reading from the N-terminus, the 389-residue chain is Chorismate synthase (389 aa).

Residues Arg-40 and Arg-46 each contribute to the NADP(+) site. Residues 130-132 (RAS), 251-252 (QA), Gly-297, 312-316 (KPIST), and Arg-338 contribute to the FMN site.

Belongs to the chorismate synthase family. Homotetramer. FMNH2 is required as a cofactor.

It catalyses the reaction 5-O-(1-carboxyvinyl)-3-phosphoshikimate = chorismate + phosphate. It participates in metabolic intermediate biosynthesis; chorismate biosynthesis; chorismate from D-erythrose 4-phosphate and phosphoenolpyruvate: step 7/7. Functionally, catalyzes the anti-1,4-elimination of the C-3 phosphate and the C-6 proR hydrogen from 5-enolpyruvylshikimate-3-phosphate (EPSP) to yield chorismate, which is the branch point compound that serves as the starting substrate for the three terminal pathways of aromatic amino acid biosynthesis. This reaction introduces a second double bond into the aromatic ring system. This is Chorismate synthase from Solibacter usitatus (strain Ellin6076).